The sequence spans 333 residues: Pro-cathepsin H (333 aa).

The first 20 residues, 1 to 20, serve as a signal peptide directing secretion; the sequence is MWAALPLLCAGAWLLSTGAT. Residues 21–95 constitute a propeptide, activation peptide; it reads AELTVNAIEK…AEIKHKFLWS (75 aa). Asparagine 70 and asparagine 99 each carry an N-linked (GlcNAc...) asparagine glycan. 4 cysteine pairs are disulfide-bonded: cysteine 100–cysteine 325, cysteine 136–cysteine 179, cysteine 170–cysteine 212, and cysteine 270–cysteine 320. Positions 104 to 113 are excised as a propeptide; sequence KSNYLRGTGP. Cysteine 139 is an active-site residue. Asparagine 228 is a glycosylation site (N-linked (GlcNAc...) asparagine). Active-site residues include histidine 279 and asparagine 299.

The protein belongs to the peptidase C1 family. Composed of a mini chain and a large chain. The large chain may be split into heavy and light chain. All chains are held together by disulfide bonds. As to expression, widely expressed with highest expression found in non-skeletal tissues. Low levels found in skeletal tissue.

Its subcellular location is the lysosome. It carries out the reaction Hydrolysis of proteins, acting as an aminopeptidase (notably, cleaving Arg-|-Xaa bonds) as well as an endopeptidase.. Its function is as follows. Important for the overall degradation of proteins in lysosomes. The polypeptide is Pro-cathepsin H (Ctsh) (Mus musculus (Mouse)).